Reading from the N-terminus, the 597-residue chain is Arginine--tRNA ligase (597 aa).

A 'HIGH' region motif is present at residues 137 to 147 (PNIAKEMHVGH).

It belongs to the class-I aminoacyl-tRNA synthetase family. In terms of assembly, monomer.

The protein resides in the cytoplasm. The catalysed reaction is tRNA(Arg) + L-arginine + ATP = L-arginyl-tRNA(Arg) + AMP + diphosphate. This Parasynechococcus marenigrum (strain WH8102) protein is Arginine--tRNA ligase.